A 1926-amino-acid chain; its full sequence is Myosin-15 (1926 aa).

In terms of domain architecture, Myosin N-terminal SH3-like spans 29–79; that stretch reads DGKKKCWIPDGENAYIEAEVKGSEDDGTVIVETADGESLSIKEDKIQQMNP. Residues 83-770 enclose the Myosin motor domain; that stretch reads EMIEDMAMLT…FLGQLEAIRD (688 aa). At Lys127 the chain carries N6,N6,N6-trimethyllysine. 176–183 is an ATP binding site; sequence GESGAGKT. 2 actin-binding regions span residues 647-669 and 749-763; these read LNKL…NPNV and RFGI…GFLG. An IQ domain is found at 773-802; it reads LSKVFTLFQARAQGKLMRIKFQKILEERDA. Positions 833 to 1926 form a coiled coil; it reads KSSEVGEEVA…REFGKKVQEE (1094 aa).

This sequence belongs to the TRAFAC class myosin-kinesin ATPase superfamily. Myosin family. In terms of assembly, muscle myosin is a hexameric protein that consists of 2 heavy chain subunits (MHC), 2 alkali light chain subunits (MLC) and 2 regulatory light chain subunits (MLC-2).

It localises to the cytoplasm. The protein resides in the myofibril. Functionally, muscle contraction. The sequence is that of Myosin-15 (MYH15) from Homo sapiens (Human).